A 339-amino-acid chain; its full sequence is Phenylalanine--tRNA ligase alpha subunit (339 aa).

A Mg(2+)-binding site is contributed by E254.

This sequence belongs to the class-II aminoacyl-tRNA synthetase family. Phe-tRNA synthetase alpha subunit type 1 subfamily. Tetramer of two alpha and two beta subunits. The cofactor is Mg(2+).

It localises to the cytoplasm. The enzyme catalyses tRNA(Phe) + L-phenylalanine + ATP = L-phenylalanyl-tRNA(Phe) + AMP + diphosphate + H(+). This Clostridium novyi (strain NT) protein is Phenylalanine--tRNA ligase alpha subunit.